Here is a 302-residue protein sequence, read N- to C-terminus: Glutamate/aspartate import solute-binding protein (302 aa).

A signal peptide spans methionine 1–alanine 22.

This sequence belongs to the bacterial solute-binding protein 3 family. The complex is composed of two ATP-binding proteins (GltL), two transmembrane proteins (GltJ and GltK) and a solute-binding protein (GltI).

It localises to the periplasm. Its function is as follows. Part of the ABC transporter complex GltIJKL involved in glutamate and aspartate uptake. Binds to both glutamate and aspartate. This Salmonella typhimurium (strain LT2 / SGSC1412 / ATCC 700720) protein is Glutamate/aspartate import solute-binding protein (gltI).